The chain runs to 261 residues: Leucine-rich repeat-containing protein 61 (261 aa).

3 LRR repeats span residues 54-75, 76-97, and 98-119; these read GLEW…ASLR, QLAV…AACE, and NLQC…QCLA. The LRRCT domain occupies 138–183; it reads NPLCASPCYWASVRELLPGLKVLDGERVSGRGSDFYQLCRDLDSSL.

This is Leucine-rich repeat-containing protein 61 (LRRC61) from Bos taurus (Bovine).